Consider the following 692-residue polypeptide: MAREFSLKNTRNIGIMAHIDAGKTTTTERILYYTGRIHKIGETHEGASQMDWMEQEQERGITITSAATTAQWKGNRVNIIDTPGHVDFTVEVERSLRVLDGAVAVLDAQSGVEPQTETVWRQATTYGVPRIVFVNKMDKIGADFLYSVGTLRDRLQANAHAIQIPIGAEDEFKGIIDLVEKKTYMYGNDLGTDIEETEGFPAEFAEEAEELRASLIEAVADYEEEMMMKYLEGEEITIEELKAGIRKATLTVDFYPVLVGSAFKNKGVQLMLDAVLDYLPSPVDVKAITGINMDTDEEIVRESTDEAPFSALAFKVMTDPYVGKLTFFRVYSGTASAGSYVKNSTKGKRERLGRILQMHANSREEIPMVFAGDIAAAVGLKDTTTGDTLCAEKDNVVLESMTFPEPVISVAIEPKTKADQDKMGQALAKLAEEDPTFRTETNPETGQTIISGMGELHLDIIVDRMRREFKVEANVGAPQVAYRETIRQSAKIDSKFARQSGGRGQYGHVVVEFEPNEEGAGFEFNNKIVGGVVPREYIPAVEHGIEEALQNGILAGYPVVDVKAALVFGSYHDVDSNEMAFKIAASMAVKQLKDKSGAVILEPMMKVEIVIPDEYMGDIMGDVTSRRGRVEGMEARGNAQVVRSMIPLSEMFGYATGLRSRTQGRGTYSMHFDHYEEVPKSVAEEIIKKANG.

The tr-type G domain occupies 8–283; the sequence is KNTRNIGIMA…AVLDYLPSPV (276 aa). GTP contacts are provided by residues 17-24, 81-85, and 135-138; these read AHIDAGKT, DTPGH, and NKMD.

Belongs to the TRAFAC class translation factor GTPase superfamily. Classic translation factor GTPase family. EF-G/EF-2 subfamily.

The protein localises to the cytoplasm. Functionally, catalyzes the GTP-dependent ribosomal translocation step during translation elongation. During this step, the ribosome changes from the pre-translocational (PRE) to the post-translocational (POST) state as the newly formed A-site-bound peptidyl-tRNA and P-site-bound deacylated tRNA move to the P and E sites, respectively. Catalyzes the coordinated movement of the two tRNA molecules, the mRNA and conformational changes in the ribosome. In Exiguobacterium sibiricum (strain DSM 17290 / CCUG 55495 / CIP 109462 / JCM 13490 / 255-15), this protein is Elongation factor G.